Here is a 363-residue protein sequence, read N- to C-terminus: Melanoma-associated antigen B16 (363 aa).

Positions 33–124 (EPCSSPHLMA…PDQSDSTDLP (92 aa)) are disordered. Residues 82–97 (ASTSSDLQHPYDSSSE) show a composition bias toward low complexity. An MAGE domain is found at 128 to 327 (VDGKVDFLVN…TVFLSQYEEA (200 aa)). Residues 342–363 (HADSSSTSGESSSDTSSNFSQV) are disordered.

In Mus musculus (Mouse), this protein is Melanoma-associated antigen B16 (Mageb16).